Consider the following 316-residue polypeptide: Homoserine kinase (316 aa).

97 to 107 (PPARGLGSSAS) is a binding site for ATP.

This sequence belongs to the GHMP kinase family. Homoserine kinase subfamily.

The protein resides in the cytoplasm. It carries out the reaction L-homoserine + ATP = O-phospho-L-homoserine + ADP + H(+). It functions in the pathway amino-acid biosynthesis; L-threonine biosynthesis; L-threonine from L-aspartate: step 4/5. Functionally, catalyzes the ATP-dependent phosphorylation of L-homoserine to L-homoserine phosphate. The protein is Homoserine kinase of Prochlorococcus marinus (strain MIT 9303).